The following is a 244-amino-acid chain: AA9 family lytic polysaccharide monooxygenase B (244 aa).

The signal sequence occupies residues 1–19 (MFLVPLLAALSLSAPKVAA). His-20 lines the Cu(2+) pocket. Tyr-39 is a (1,4-beta-D-glucosyl)n binding site. Intrachain disulfides connect Cys-68-Cys-189 and Cys-111-Cys-115. Residue His-99 participates in Cu(2+) binding. A glycan (N-linked (GlcNAc...) asparagine) is linked at Asn-152. Residues His-178 and Gln-184 each contribute to the O2 site. Position 186 (Tyr-186) interacts with Cu(2+). Residues Asp-224, Tyr-226, and Glu-229 each coordinate (1,4-beta-D-glucosyl)n. Asn-233 carries an N-linked (GlcNAc...) asparagine glycan.

The protein belongs to the polysaccharide monooxygenase AA9 family. It depends on Cu(2+) as a cofactor.

It localises to the secreted. It catalyses the reaction [(1-&gt;4)-beta-D-glucosyl]n+m + reduced acceptor + O2 = 4-dehydro-beta-D-glucosyl-[(1-&gt;4)-beta-D-glucosyl]n-1 + [(1-&gt;4)-beta-D-glucosyl]m + acceptor + H2O.. In terms of biological role, lytic polysaccharide monooxygenase (LPMO) that depolymerizes crystalline and amorphous polysaccharides via the oxidation of scissile alpha- or beta-(1-4)-glycosidic bonds, yielding specifically C1 oxidation product. Catalysis by LPMOs requires the reduction of the active-site copper from Cu(II) to Cu(I) by a reducing agent and H(2)O(2) or O(2) as a cosubstrate. Displays catalytic activity on insoluble cellulose using I-beta microfibril model substrate. The sequence is that of AA9 family lytic polysaccharide monooxygenase B from Heterobasidion irregulare (strain TC 32-1).